The chain runs to 509 residues: ATP synthase subunit alpha (509 aa).

169–176 (GDRQTGKT) is a binding site for ATP.

It belongs to the ATPase alpha/beta chains family. F-type ATPases have 2 components, CF(1) - the catalytic core - and CF(0) - the membrane proton channel. CF(1) has five subunits: alpha(3), beta(3), gamma(1), delta(1), epsilon(1). CF(0) has four main subunits: a(1), b(1), b'(1) and c(9-12).

Its subcellular location is the cell inner membrane. It carries out the reaction ATP + H2O + 4 H(+)(in) = ADP + phosphate + 5 H(+)(out). Produces ATP from ADP in the presence of a proton gradient across the membrane. The alpha chain is a regulatory subunit. The polypeptide is ATP synthase subunit alpha (Bradyrhizobium sp. (strain BTAi1 / ATCC BAA-1182)).